The chain runs to 475 residues: tRNA modification GTPase MnmE (475 aa).

R24, E81, and K124 together coordinate (6S)-5-formyl-5,6,7,8-tetrahydrofolate. In terms of domain architecture, TrmE-type G spans 220–397; that stretch reads GLSVVLAGQP…LRKELLRLVG (178 aa). N230 lines the K(+) pocket. GTP contacts are provided by residues 230–235, 249–255, 274–277, and 378–380; these read NVGKSS, TPIAGTT, DTAG, and SAR. Residue S234 participates in Mg(2+) binding. K(+)-binding residues include T249, I251, and T254. Residue T255 coordinates Mg(2+). K475 provides a ligand contact to (6S)-5-formyl-5,6,7,8-tetrahydrofolate.

Belongs to the TRAFAC class TrmE-Era-EngA-EngB-Septin-like GTPase superfamily. TrmE GTPase family. Homodimer. Heterotetramer of two MnmE and two MnmG subunits. It depends on K(+) as a cofactor.

The protein localises to the cytoplasm. Functionally, exhibits a very high intrinsic GTPase hydrolysis rate. Involved in the addition of a carboxymethylaminomethyl (cmnm) group at the wobble position (U34) of certain tRNAs, forming tRNA-cmnm(5)s(2)U34. The protein is tRNA modification GTPase MnmE of Cupriavidus pinatubonensis (strain JMP 134 / LMG 1197) (Cupriavidus necator (strain JMP 134)).